A 479-amino-acid chain; its full sequence is Ribosomal RNA small subunit methyltransferase F (479 aa).

Residues 125–131 (AAAPGSK), glutamate 149, aspartate 176, and aspartate 194 contribute to the S-adenosyl-L-methionine site. Residue cysteine 247 is the Nucleophile of the active site.

This sequence belongs to the class I-like SAM-binding methyltransferase superfamily. RsmB/NOP family.

Its subcellular location is the cytoplasm. It carries out the reaction cytidine(1407) in 16S rRNA + S-adenosyl-L-methionine = 5-methylcytidine(1407) in 16S rRNA + S-adenosyl-L-homocysteine + H(+). Specifically methylates the cytosine at position 1407 (m5C1407) of 16S rRNA. The protein is Ribosomal RNA small subunit methyltransferase F of Escherichia coli (strain UTI89 / UPEC).